The sequence spans 178 residues: Zinc finger protein ZAT11 (178 aa).

C2H2-type zinc fingers lie at residues 47 to 69 (FECK…RASH) and 94 to 116 (HKCS…MRRH).

Expressed in leaves.

It is found in the nucleus. Functionally, probable transcription factor that may be involved in stress responses. This is Zinc finger protein ZAT11 (ZAT11) from Arabidopsis thaliana (Mouse-ear cress).